The following is a 442-amino-acid chain: Chromosomal replication initiator protein DnaA (442 aa).

Residues 1–75 form a domain I, interacts with DnaA modulators region; sequence MDAWPRCLER…GNGEVALAVG (75 aa). The tract at residues 75–104 is domain II; the sequence is GSRPRAPEPAPAPVAATIAPQAAPIAPFAG. A domain III, AAA+ region region spans residues 105–322; it reads NLDSHYTFAN…GALNTLVARA (218 aa). ATP-binding residues include Gly-150, Gly-152, Lys-153, and Thr-154. The interval 323–442 is domain IV, binds dsDNA; that stretch reads NFTGRSITVE…WEKLIRKLSE (120 aa).

This sequence belongs to the DnaA family. Oligomerizes as a right-handed, spiral filament on DNA at oriC.

The protein resides in the cytoplasm. In terms of biological role, plays an essential role in the initiation and regulation of chromosomal replication. ATP-DnaA binds to the origin of replication (oriC) to initiate formation of the DNA replication initiation complex once per cell cycle. Binds the DnaA box (a 9 base pair repeat at the origin) and separates the double-stranded (ds)DNA. Forms a right-handed helical filament on oriC DNA; dsDNA binds to the exterior of the filament while single-stranded (ss)DNA is stabiized in the filament's interior. The ATP-DnaA-oriC complex binds and stabilizes one strand of the AT-rich DNA unwinding element (DUE), permitting loading of DNA polymerase. After initiation quickly degrades to an ADP-DnaA complex that is not apt for DNA replication. Binds acidic phospholipids. The protein is Chromosomal replication initiator protein DnaA of Xanthomonas oryzae pv. oryzae (strain PXO99A).